Here is a 358-residue protein sequence, read N- to C-terminus: Gentisate 1,2-dioxygenase (358 aa).

The region spanning 99–165 is the Cupin type-2 domain; that stretch reads QYLGPREVAP…VTDEPMAWLD (67 aa). A disordered region spans residues 185–215; that stretch reads DELSTRETPERSRGERLWGHPGLRPIGRPDQ. Residues 187–202 show a composition bias toward basic and acidic residues; it reads LSTRETPERSRGERLW.

The protein belongs to the gentisate 1,2-dioxygenase family.

It carries out the reaction 2,5-dihydroxybenzoate + O2 = 3-maleylpyruvate + H(+). Involved in the degradation of salicylate via a pathway involving coenzyme A derivative. Catalyzes the oxygen-dependent ring fission of gentisate between the carboxyl and proximal hydroxyl groups at positions 1 and 2 of the aromatic ring to form maleylpyruvate. The substrate specificity is strong, since salicylate, catechol, protocatechuic acid, homogenetisate, 2,3-dihydroxybenzoate or 5-aminosalicylate cannot substitute for gentisate in the ring cleavage reaction. The sequence is that of Gentisate 1,2-dioxygenase from Streptomyces sp.